Reading from the N-terminus, the 30-residue chain is GIPCGESCVFIPCISSVVGCSCKSKVCYLD.

A cross-link (cyclopeptide (Gly-Asp)) is located at residues 1 to 30; the sequence is GIPCGESCVFIPCISSVVGCSCKSKVCYLD. Intrachain disulfides connect C4/C20, C8/C22, and C13/C27.

Post-translationally, contains 3 disulfide bonds. This is a cyclic peptide.

Functionally, probably participates in a plant defense mechanism. This is Cyclotide cter-F from Clitoria ternatea (Butterfly pea).